Consider the following 793-residue polypeptide: Serine/threonine-protein kinase MARK1 (793 aa).

The disordered stretch occupies residues 1–40 (MSARTPLPTVNERDTENHTSVDGYTETHIPPTKSSSRQNI). Residue Thr5 is modified to Phosphothreonine. The Protein kinase domain maps to 60–311 (YRLQKTIGKG…LEQIMKDRWM (252 aa)). ATP-binding positions include 66–74 (IGKGNFAKV) and Lys89. Asp182 serves as the catalytic Proton acceptor. Thr208 is modified (phosphothreonine). Residue Thr215 is modified to Phosphothreonine; by LKB1 and TAOK1. Ser219 is modified (phosphoserine; by GSK3-beta). One can recognise a UBA domain in the interval 329-370 (DLNDAKRIDIMVTMGFARDEINDALVSQKYDEVMATYILLGR). Disordered stretches follow at residues 377-499 (GGES…GGSM) and 517-697 (LQNG…KPRS). The segment covering 380 to 403 (SLSSGNLCQRSRPSSDLNNSTLQS) has biased composition (polar residues). Ser382, Ser390, Ser393, Ser403, Ser423, and Ser444 each carry phosphoserine. Over residues 447-459 (SEQKEEWDKDTAR) the composition is skewed to basic and acidic residues. Positions 462–473 (GSTTVGSKSEVT) are enriched in polar residues. Ser475 bears the Phosphoserine mark. Residues 487–499 (AGPSNNVYSGGSM) show a composition bias toward polar residues. Composition is skewed to low complexity over residues 523–547 (SSLTEMSASSMSSTGSTVASAGPSA) and 585–599 (PAASPSAHSISASTP). Ser588 is modified (phosphoserine). Thr613 carries the phosphothreonine; by PKC/PRKCZ modification. The segment covering 647–657 (GTSTGIISKIT) has biased composition (polar residues). Composition is skewed to basic and acidic residues over residues 661 to 676 (VRRDPSEGEASGRTDT) and 683 to 695 (EPKDKEEGKEAKP). Residue Ser666 is modified to Phosphoserine. Positions 744–793 (DARQDSLVQWEMEVCKLPRLSLNGVRFKRISGTSIAFKNIASKIANELKL) constitute a KA1 domain.

This sequence belongs to the protein kinase superfamily. CAMK Ser/Thr protein kinase family. SNF1 subfamily. As to quaternary structure, interacts with MAPT/TAU. Requires Mg(2+) as cofactor. In terms of processing, phosphorylation at Thr-613 by PRKCZ/aPKC in polarized epithelial cells inhibits the kinase activity. Phosphorylated at Thr-215 by STK11/LKB1 in complex with STE20-related adapter-alpha (STRADA) pseudo kinase and CAB39. Phosphorylation at Thr-215 by TAOK1 activates the kinase activity, leading to phosphorylation and detachment of MAPT/TAU from microtubules. Phosphorylation at Ser-219 by GSK3-beta (GSK3B) inhibits the kinase activity. As to expression, highly expressed in brain and spleen and at lower levels in kidney and skeletal muscle.

Its subcellular location is the cell membrane. It is found in the cytoplasm. The protein localises to the cytoskeleton. It localises to the cell projection. The protein resides in the dendrite. It carries out the reaction L-seryl-[protein] + ATP = O-phospho-L-seryl-[protein] + ADP + H(+). The catalysed reaction is L-threonyl-[protein] + ATP = O-phospho-L-threonyl-[protein] + ADP + H(+). The enzyme catalyses L-seryl-[tau protein] + ATP = O-phospho-L-seryl-[tau protein] + ADP + H(+). It catalyses the reaction L-threonyl-[tau protein] + ATP = O-phospho-L-threonyl-[tau protein] + ADP + H(+). Activated by phosphorylation on Thr-215. Inhibited by phosphorylation at Ser-219. Serine/threonine-protein kinase. Involved in cell polarity and microtubule dynamics regulation. Phosphorylates DCX, MAP2 and MAP4. Phosphorylates the microtubule-associated protein MAPT/TAU. Involved in cell polarity by phosphorylating the microtubule-associated proteins MAP2, MAP4 and MAPT/TAU at KXGS motifs, causing detachment from microtubules, and their disassembly. Involved in the regulation of neuronal migration through its dual activities in regulating cellular polarity and microtubule dynamics, possibly by phosphorylating and regulating DCX. Also acts as a positive regulator of the Wnt signaling pathway, probably by mediating phosphorylation of dishevelled proteins (DVL1, DVL2 and/or DVL3). The polypeptide is Serine/threonine-protein kinase MARK1 (Rattus norvegicus (Rat)).